The chain runs to 43 residues: Photosystem II reaction center protein Psb30 (43 aa).

A helical transmembrane segment spans residues 15 to 35; sequence VIFQLTFVSLILISGPVVIFL.

This sequence belongs to the Psb30/Ycf12 family. As to quaternary structure, PSII is composed of 1 copy each of membrane proteins PsbA, PsbB, PsbC, PsbD, PsbE, PsbF, PsbH, PsbI, PsbJ, PsbK, PsbL, PsbM, PsbT, PsbX, PsbY, PsbZ, Psb30/Ycf12, peripheral proteins PsbO, CyanoQ (PsbQ), PsbU, PsbV and a large number of cofactors. It forms dimeric complexes.

Its subcellular location is the cellular thylakoid membrane. Functionally, a core subunit of photosystem II (PSII), probably helps stabilize the reaction center. The sequence is that of Photosystem II reaction center protein Psb30 from Picosynechococcus sp. (strain ATCC 27264 / PCC 7002 / PR-6) (Agmenellum quadruplicatum).